The sequence spans 226 residues: Protein Thf1 (226 aa).

The stretch at 183–213 (EEKMQKDLDLYRSNLEKMDQLLTVIEEALQA) forms a coiled coil.

The protein belongs to the THF1 family.

Functionally, may be involved in photosynthetic membrane biogenesis. The sequence is that of Protein Thf1 from Gloeothece citriformis (strain PCC 7424) (Cyanothece sp. (strain PCC 7424)).